Reading from the N-terminus, the 488-residue chain is uncharacterized protein (488 aa).

The protein resides in the cytoplasm. The protein localises to the nucleus. This is an uncharacterized protein from Schizosaccharomyces pombe (strain 972 / ATCC 24843) (Fission yeast).